The chain runs to 343 residues: Glucokinase (343 aa).

18 to 23 (GDIGGT) contacts ATP.

The protein belongs to the bacterial glucokinase family.

It is found in the cytoplasm. The enzyme catalyses D-glucose + ATP = D-glucose 6-phosphate + ADP + H(+). This chain is Glucokinase, found in Brucella melitensis biotype 1 (strain ATCC 23456 / CCUG 17765 / NCTC 10094 / 16M).